The following is a 551-amino-acid chain: Chaperonin GroEL (551 aa).

Residues 30–33 (TLGP), Lys-51, 87–91 (DGTTT), Gly-415, and Asp-496 contribute to the ATP site.

This sequence belongs to the chaperonin (HSP60) family. As to quaternary structure, forms a cylinder of 14 subunits composed of two heptameric rings stacked back-to-back. Interacts with the co-chaperonin GroES.

Its subcellular location is the cytoplasm. The catalysed reaction is ATP + H2O + a folded polypeptide = ADP + phosphate + an unfolded polypeptide.. In terms of biological role, together with its co-chaperonin GroES, plays an essential role in assisting protein folding. The GroEL-GroES system forms a nano-cage that allows encapsulation of the non-native substrate proteins and provides a physical environment optimized to promote and accelerate protein folding. The polypeptide is Chaperonin GroEL (Maricaulis maris (strain MCS10) (Caulobacter maris)).